The primary structure comprises 500 residues: MNSFPWLTIFVGLPISAGFLIFVFPHRGNKVIRWYTIFICVLELLLMTYAFSYYFQLDDPLIQLTESYKWINFFDFYWRLGIDGLSLGPILLTGFITTLATLAARPITRDSRLFHFLMLAMYSGQIGLFSSQNLLLFFIMWELELIPVYLLLAMWGGKQRLYSATKFILYTAGSSVFLLMGALGIAFYASNEPTFNFETSANQSYPVTLEILFYIGFLIAFAVKSPIIPLHTWLPDTHGEAHYSTCMLLAGILLKMGAYGLVRINMELLSHAHSIFSSWLIIVGAIQIIYAASTSSGQKNLKKRIAYSSVSHMGFTIIGICSISDMGLNGAILQIISHGFIGAALFFLSGTSYDRIRLVYLDEMGGMATLMPKIFMMFSILSLASLALPGMSGFFAELVVFFGIITAKKYFLMPKILITFVTAVGTILTPIYLLSMLRQMFYGYKLFNARNSYFFDSGPRELFVSIAILLPVISIGIYPDFVFSLSVDKVEAILSNYFYS.

The next 14 helical transmembrane spans lie at 4–24 (FPWLTIFVGLPISAGFLIFVF), 35–55 (YTIFICVLELLLMTYAFSYYF), 84–104 (GLSLGPILLTGFITTLATLAA), 113–133 (LFHFLMLAMYSGQIGLFSSQN), 134–154 (LLLFFIMWELELIPVYLLLAM), 167–187 (FILYTAGSSVFLLMGALGIAF), 211–231 (ILFYIGFLIAFAVKSPIIPLH), 242–262 (HYSTCMLLAGILLKMGAYGLV), 272–292 (AHSIFSSWLIIVGAIQIIYAA), 305–325 (IAYSSVSHMGFTIIGICSISD), 330–350 (GAILQIISHGFIGAALFFLSG), 386–406 (LALPGMSGFFAELVVFFGIIT), 416–436 (ILITFVTAVGTILTPIYLLSM), and 463–483 (FVSIAILLPVISIGIYPDFVF).

The protein belongs to the complex I subunit 4 family.

It localises to the plastid. It is found in the chloroplast thylakoid membrane. The catalysed reaction is a plastoquinone + NADH + (n+1) H(+)(in) = a plastoquinol + NAD(+) + n H(+)(out). It carries out the reaction a plastoquinone + NADPH + (n+1) H(+)(in) = a plastoquinol + NADP(+) + n H(+)(out). The chain is NAD(P)H-quinone oxidoreductase chain 4, chloroplastic from Populus trichocarpa (Western balsam poplar).